A 222-amino-acid polypeptide reads, in one-letter code: Probable GTP-binding protein EngB (222 aa).

In terms of domain architecture, EngB-type G spans 22–197 (TSAEIAFVGR…ETVVAGWFAG (176 aa)). Ser37 and Thr59 together coordinate Mg(2+). The disordered stretch occupies residues 201–222 (RQADELTDGEPDDRTPDPDSAS). Residues 212–222 (DDRTPDPDSAS) show a composition bias toward basic and acidic residues.

Belongs to the TRAFAC class TrmE-Era-EngA-EngB-Septin-like GTPase superfamily. EngB GTPase family. The cofactor is Mg(2+).

Functionally, necessary for normal cell division and for the maintenance of normal septation. This Laribacter hongkongensis (strain HLHK9) protein is Probable GTP-binding protein EngB.